Here is a 337-residue protein sequence, read N- to C-terminus: tRNA N6-adenosine threonylcarbamoyltransferase (337 aa).

Residues His-111 and His-115 each contribute to the Fe cation site. Substrate-binding positions include 134–138 (LVSGG), Asp-167, Gly-180, and Asn-272. Fe cation is bound at residue Asp-300.

It belongs to the KAE1 / TsaD family. Fe(2+) is required as a cofactor.

The protein localises to the cytoplasm. The catalysed reaction is L-threonylcarbamoyladenylate + adenosine(37) in tRNA = N(6)-L-threonylcarbamoyladenosine(37) in tRNA + AMP + H(+). Required for the formation of a threonylcarbamoyl group on adenosine at position 37 (t(6)A37) in tRNAs that read codons beginning with adenine. Is involved in the transfer of the threonylcarbamoyl moiety of threonylcarbamoyl-AMP (TC-AMP) to the N6 group of A37, together with TsaE and TsaB. TsaD likely plays a direct catalytic role in this reaction. This Shewanella loihica (strain ATCC BAA-1088 / PV-4) protein is tRNA N6-adenosine threonylcarbamoyltransferase.